We begin with the raw amino-acid sequence, 501 residues long: Pyruvate kinase (501 aa).

Arg-50 is a binding site for substrate. 4 residues coordinate K(+): Asn-52, Ser-54, Asp-85, and Thr-86. 52–55 (NFSH) is a binding site for ATP. ATP contacts are provided by Arg-92 and Lys-178. Residue Glu-243 participates in Mg(2+) binding. The substrate site is built by Gly-266, Asp-267, and Thr-299. Asp-267 provides a ligand contact to Mg(2+).

This sequence belongs to the pyruvate kinase family. In terms of assembly, homotetramer. It depends on Mg(2+) as a cofactor. K(+) is required as a cofactor.

It carries out the reaction pyruvate + ATP = phosphoenolpyruvate + ADP + H(+). It functions in the pathway carbohydrate degradation; glycolysis; pyruvate from D-glyceraldehyde 3-phosphate: step 5/5. This chain is Pyruvate kinase (PYK1), found in Naumovozyma castellii (Yeast).